A 352-amino-acid polypeptide reads, in one-letter code: Dihydrorhizobitoxine desaturase (352 aa).

A run of 3 helical transmembrane segments spans residues 53–73, 89–109, and 204–224; these read LATL…IGAY, LAKN…YPLF, and IGIL…LFWI.

It belongs to the fatty acid desaturase type 1 family.

Its subcellular location is the cell inner membrane. It catalyses the reaction dihydrorhizobitoxine + 2 reduced [2Fe-2S]-[ferredoxin] + O2 + 2 H(+) = rhizobitoxine + 2 oxidized [2Fe-2S]-[ferredoxin] + 2 H2O. Its function is as follows. Involved in the biosynthesis of the nodulation enhancer compound rhizobitoxine. Catalyzes the final step of the pathway, the introduction of a carbon double bond into the C3 position of dihydrorhizobitoxine to produce rhizobitoxine. This Bradyrhizobium elkanii protein is Dihydrorhizobitoxine desaturase.